A 556-amino-acid polypeptide reads, in one-letter code: Zinc finger protein 18 (556 aa).

An SCAN box domain is found at 41 to 123 (RQLFRQFRYQ…TLVESLKGEP (83 aa)). Positions 169 to 195 (QDLPLQNSSSATGELLSHGVKEESDME) are disordered. The region spanning 218 to 291 (ELGTAVLPPL…HLHGAEKMAR (74 aa)) is the KRAB domain. C2H2-type zinc fingers lie at residues 415–437 (PTCR…QRTH), 443–465 (FHCH…QRTH), 471–493 (CKCD…EKIH), 499–521 (YKCP…QRVH), and 527–549 (YKCT…QRSH).

Belongs to the krueppel C2H2-type zinc-finger protein family.

It is found in the nucleus. Its function is as follows. May be involved in transcriptional regulation. In Mus musculus (Mouse), this protein is Zinc finger protein 18 (Znf18).